Here is a 44-residue protein sequence, read N- to C-terminus: Photosystem I reaction center subunit IX (44 aa).

The helical transmembrane segment at Y7–I27 threads the bilayer.

The protein belongs to the PsaJ family.

The protein localises to the plastid. It is found in the chloroplast thylakoid membrane. In terms of biological role, may help in the organization of the PsaE and PsaF subunits. The polypeptide is Photosystem I reaction center subunit IX (Cycas taitungensis (Prince sago)).